Here is a 202-residue protein sequence, read N- to C-terminus: Arenicin-1 (202 aa).

The N-terminal stretch at 1–25 is a signal peptide; it reads MTSTQSVAVCATLILAIFCVNDIHC. The propeptide occupies 26–181; sequence DPIAEARAAA…SGDNNEPEKR (156 aa). Positions 73 to 168 constitute a BRICHOS domain; it reads GDGVEGSVMV…ACQGKSVYWL (96 aa). Intrachain disulfides connect cysteine 100–cysteine 160 and cysteine 184–cysteine 201.

Has antimicrobial activity against the Gram-negative bacteria E.coli and P.mirabilis, the Gram-positive bacterium L.monocytogenes and the yeast C.albicans. The chain is Arenicin-1 from Arenicola marina (Lugworm).